Here is a 401-residue protein sequence, read N- to C-terminus: Tyrosine--tRNA ligase (401 aa).

Positions 45-54 match the 'HIGH' region motif; that stretch reads PTAPDLHLGH. The 'KMSKS' region signature appears at 230–234; the sequence is KMSKS. K233 lines the ATP pocket. The 61-residue stretch at 339–399 folds into the S4 RNA-binding domain; it reads IWLAKALVEC…GKRKFAKLKV (61 aa).

It belongs to the class-I aminoacyl-tRNA synthetase family. TyrS type 2 subfamily. In terms of assembly, homodimer.

It is found in the cytoplasm. The catalysed reaction is tRNA(Tyr) + L-tyrosine + ATP = L-tyrosyl-tRNA(Tyr) + AMP + diphosphate + H(+). Functionally, catalyzes the attachment of tyrosine to tRNA(Tyr) in a two-step reaction: tyrosine is first activated by ATP to form Tyr-AMP and then transferred to the acceptor end of tRNA(Tyr). The chain is Tyrosine--tRNA ligase from Campylobacter jejuni subsp. jejuni serotype O:2 (strain ATCC 700819 / NCTC 11168).